A 292-amino-acid chain; its full sequence is Homeobox-leucine zipper protein HOX19 (292 aa).

Disordered regions lie at residues 14 to 85, 99 to 133, and 217 to 236; these read LALG…HSVS, RERA…RLTK, and FAPP…PPAP. Low complexity predominate over residues 28–74; that stretch reads TDAAAAHRGGCRRPSPSSQCPPLEPSLTLSLPDDAAAGAAATATATA. The span at 99–109 shows a compositional bias: basic and acidic residues; sequence RERAEEADGER. The homeobox DNA-binding region spans 124-183; the sequence is STRKKLRLTKEQSALLEDRFREHSTLNPKQKVALAKQLNLRPRQVEVWFQNRRARTKLKQ. The tract at residues 182 to 226 is leucine-zipper; sequence KQTEVDCEFLKRCCETLTEENRRLQRELQELRALKFAPPPPSSAA.

Belongs to the HD-ZIP homeobox family. Class II subfamily. As to expression, expressed in seedlings, roots, stems, leaf sheaths and blades and panicles.

The protein localises to the nucleus. Functionally, probable transcription factor. This chain is Homeobox-leucine zipper protein HOX19 (HOX19), found in Oryza sativa subsp. japonica (Rice).